The chain runs to 406 residues: Vitamin D3 dihydroxylase (406 aa).

Positions 1-15 are enriched in low complexity; that stretch reads MTDTATTPQTTDAPA. A disordered region spans residues 1-24; it reads MTDTATTPQTTDAPAFPSNRSCPY. Threonine 81 provides a ligand contact to calciol. Residues histidine 103 and arginine 107 each contribute to the heme site. Calciol contacts are provided by arginine 193, serine 236, and isoleucine 293. The heme site is built by arginine 297, histidine 353, and cysteine 355.

It belongs to the cytochrome P450 family. Heme is required as a cofactor.

It localises to the cytoplasm. The enzyme catalyses calciol + 2 reduced [2Fe-2S]-[ferredoxin] + O2 + 2 H(+) = calcidiol + 2 oxidized [2Fe-2S]-[ferredoxin] + H2O. It catalyses the reaction calcidiol + 2 reduced [2Fe-2S]-[ferredoxin] + O2 + 2 H(+) = calcitriol + 2 oxidized [2Fe-2S]-[ferredoxin] + H2O. Its function is as follows. Involved in the metabolism of vitamin D3 (calciol) and of a number of sulfonylurea herbicides. Catalyzes the two-step hydroxylation (25- and 1-alpha-hydroxylation) of vitamin D3 (VD3) to yield its active form 1-alpha,25-dihydroxyvitamin D3 (calcitriol). The first step is the hydroxylation of the C-25 position of VD3 to produce 25-hydroxyvitamin D3 (calcidiol). The second reaction is the hydroxylation of the C1-alpha-position of calcidiol to produce calcitriol. It can also hydroxylate vitamin D2. This is Vitamin D3 dihydroxylase from Streptomyces griseolus.